The sequence spans 431 residues: Protein translocase subunit SecY 1 (431 aa).

A run of 10 helical transmembrane segments spans residues Ile-18 to Gly-38, Tyr-67 to Leu-87, Tyr-115 to Leu-135, Val-150 to Ile-170, Gly-178 to Ile-198, Ile-215 to Val-235, Val-268 to Phe-288, Gly-312 to Val-332, Leu-365 to Leu-385, and Leu-392 to Glu-412.

This sequence belongs to the SecY/SEC61-alpha family. As to quaternary structure, component of the Sec protein translocase complex. Heterotrimer consisting of SecY, SecE and SecG subunits. The heterotrimers can form oligomers, although 1 heterotrimer is thought to be able to translocate proteins. Interacts with the ribosome. Interacts with SecDF, and other proteins may be involved. Interacts with SecA.

It is found in the cell membrane. In terms of biological role, the central subunit of the protein translocation channel SecYEG. Consists of two halves formed by TMs 1-5 and 6-10. These two domains form a lateral gate at the front which open onto the bilayer between TMs 2 and 7, and are clamped together by SecE at the back. The channel is closed by both a pore ring composed of hydrophobic SecY resides and a short helix (helix 2A) on the extracellular side of the membrane which forms a plug. The plug probably moves laterally to allow the channel to open. The ring and the pore may move independently. This is Protein translocase subunit SecY 1 from Lactobacillus kefiranofaciens subsp. kefiranofaciens.